A 900-amino-acid polypeptide reads, in one-letter code: Translation initiation factor IF-2 (900 aa).

3 stretches are compositionally biased toward basic and acidic residues: residues 119 to 158 (AAKA…EKQE), 165 to 191 (ADEK…KADA), and 198 to 229 (EEAR…DHHV). The disordered stretch occupies residues 119–306 (AAKAEAEAKA…NARSVAPESM (188 aa)). Positions 257–272 (SANAGNNANSNSNAGS) are enriched in low complexity. The 170-residue stretch at 400–569 (PRAPVVTIMG…LLESEVLELK (170 aa)) folds into the tr-type G domain. A G1 region spans residues 409 to 416 (GHVDHGKT). A GTP-binding site is contributed by 409-416 (GHVDHGKT). The tract at residues 434 to 438 (GITQH) is G2. A G3 region spans residues 455–458 (DTPG). GTP is bound by residues 455–459 (DTPGH) and 509–512 (NKID). The interval 509–512 (NKID) is G4. A G5 region spans residues 545–547 (SAK).

Belongs to the TRAFAC class translation factor GTPase superfamily. Classic translation factor GTPase family. IF-2 subfamily.

The protein resides in the cytoplasm. Functionally, one of the essential components for the initiation of protein synthesis. Protects formylmethionyl-tRNA from spontaneous hydrolysis and promotes its binding to the 30S ribosomal subunits. Also involved in the hydrolysis of GTP during the formation of the 70S ribosomal complex. This chain is Translation initiation factor IF-2, found in Shewanella piezotolerans (strain WP3 / JCM 13877).